We begin with the raw amino-acid sequence, 874 residues long: MTENSQQQPPASEPELPTQYAPADVEGTLYERWVERGYFEADAKSDKPPFTVVIPPPNVTGSLHLGHAFEHTLIDALTRRKRMQGYETLWQPGMDHAGIATQNVVERELGKEGKSRHDLGRAAFVERVWQWKAESGGQISGQMRRLGDGVAWSRERFTMDEGLSQAVQTIFKKLYDDELIYRAERIINWCPRCLTAISDIEVEYQDDDGELVSMKYGEGDDTIVVATTRAETMLGDTAVAVHPDDERYKHLVGKTIRLPLTERFIPVVADTHVDPEFGTGAVKVTPAHDPNDFEIGQRHNLPNIAVMDEHAVITVSGPFQGLDRLEARSAIVAALRAEGRIVAEKRPYVHSVGHCSRCKTTIEPRLSMQWWVKVGPLAKAAGDAVREGKVKIHPQEMEKRYFDWVDNLHDWCISRQLWWGHRIPVWYGPNGEVVCVGPDDEVPTGEGWSQDTDVLDTWFSSGLWPFSTLGWPEQTESLAKFYPNSVLVTGYDILFFWVARMMMFGLYAMDGTPPFHTIALHGMVRDQFGKKMSKSFGNAVNPLDWMDKYGSDALRFTLARGANPGVDVPIGEDWVQGSRNFANKIWNATRFALMNGATVEGELPPVEQQSATDRWILSRLNATVAEVDALYDDYQFAKLSDALFHFAWDEVFDWYVELSKTTFMGGGEAAKVSGRVLGEVLDVTLRLLHPIVPFVTETLWTTLTGGESVVIADWPVDSGFRDQAAEKEIETLQSVITEVRRFRADQGLQPGQRVPARLTLDDTALAPHEAAIRQLLRLQPEGEDFAATATLPVAGATVALDLSGTIDIVAERKRLAKDLAAAEKEKAQAGAKLGNEAFLAKAPDHVVDKIRGRLAKADEDIARIQAQLDRMPEA.

Residues 1–10 are compositionally biased toward polar residues; sequence MTENSQQQPP. The tract at residues 1–23 is disordered; that stretch reads MTENSQQQPPASEPELPTQYAPA. Residues 57–67 carry the 'HIGH' region motif; it reads PNVTGSLHLGH. Positions 531–535 match the 'KMSKS' region motif; sequence KMSKS. Lys-534 is an ATP binding site. Positions 806–871 form a coiled coil; sequence IDIVAERKRL…ARIQAQLDRM (66 aa).

It belongs to the class-I aminoacyl-tRNA synthetase family. ValS type 1 subfamily. In terms of assembly, monomer.

It localises to the cytoplasm. It carries out the reaction tRNA(Val) + L-valine + ATP = L-valyl-tRNA(Val) + AMP + diphosphate. Catalyzes the attachment of valine to tRNA(Val). As ValRS can inadvertently accommodate and process structurally similar amino acids such as threonine, to avoid such errors, it has a 'posttransfer' editing activity that hydrolyzes mischarged Thr-tRNA(Val) in a tRNA-dependent manner. This chain is Valine--tRNA ligase, found in Streptomyces avermitilis (strain ATCC 31267 / DSM 46492 / JCM 5070 / NBRC 14893 / NCIMB 12804 / NRRL 8165 / MA-4680).